Reading from the N-terminus, the 319-residue chain is MNPNYLDFEQPIADLEAKIQELRKASTGPAVNVDAEVRALRDKLRVRTAQIFRDLSAWQVSQLARHPQRPYTLDYINTMCDEFQELAGDRAYADDKAIVGGLGRIDGRPVVIIGHQKGRDTKSKVARNFGMPRPEGYRKALRLMKLAERFRLPLLTFIDTPGAYPGIGAEERGQSEAIARNLMEMAELKVPVICTVIGEGGSGGALAIGVGDRTLMLEYGTYSVISPEGCASILWKDAAKAKDAAEQLGLTAKRLKGLGLVDKVIREPTGGAHRNPEQMGKRLKAVLLNELDALEKVPVDALMQQRYERLRSYGAYEGH.

The CoA carboxyltransferase C-terminal domain maps to N32–A293.

This sequence belongs to the AccA family. In terms of assembly, acetyl-CoA carboxylase is a heterohexamer composed of biotin carboxyl carrier protein (AccB), biotin carboxylase (AccC) and two subunits each of ACCase subunit alpha (AccA) and ACCase subunit beta (AccD).

The protein resides in the cytoplasm. The catalysed reaction is N(6)-carboxybiotinyl-L-lysyl-[protein] + acetyl-CoA = N(6)-biotinyl-L-lysyl-[protein] + malonyl-CoA. The protein operates within lipid metabolism; malonyl-CoA biosynthesis; malonyl-CoA from acetyl-CoA: step 1/1. In terms of biological role, component of the acetyl coenzyme A carboxylase (ACC) complex. First, biotin carboxylase catalyzes the carboxylation of biotin on its carrier protein (BCCP) and then the CO(2) group is transferred by the carboxyltransferase to acetyl-CoA to form malonyl-CoA. In Xanthomonas campestris pv. campestris (strain B100), this protein is Acetyl-coenzyme A carboxylase carboxyl transferase subunit alpha.